The sequence spans 436 residues: ATP-dependent RNA helicase SUB2 (436 aa).

Residues 1–16 (MSAEEDLIDYSDEELN) show a composition bias toward acidic residues. The tract at residues 1–33 (MSAEEDLIDYSDEELNTNETAAPAADSNGKKGE) is disordered. A Q motif motif is present at residues 52–80 (TGFRDFLLKPELLRAIGDCGFEHPSEVQQ). In terms of domain architecture, Helicase ATP-binding spans 83–258 (IPQAMLGGDI…KKFMQNPTEH (176 aa)). 96-103 (AKSGLGKT) contributes to the ATP binding site. The DEAD box motif lies at 205 to 208 (DECD). In terms of domain architecture, Helicase C-terminal spans 270–431 (GLQQYFVALE…EFPKDGIDAS (162 aa)).

Belongs to the DEAD box helicase family. DECD subfamily.

Its subcellular location is the nucleus. It catalyses the reaction ATP + H2O = ADP + phosphate + H(+). In terms of biological role, ATP-binding RNA helicase involved in transcription elongation and required for the export of mRNA out of the nucleus. SUB2 also plays a role in pre-mRNA splicing and spliceosome assembly. May be involved in rDNA and telomeric silencing, and maintenance of genome integrity. This chain is ATP-dependent RNA helicase SUB2 (SUB2), found in Pyricularia oryzae (strain 70-15 / ATCC MYA-4617 / FGSC 8958) (Rice blast fungus).